We begin with the raw amino-acid sequence, 661 residues long: MKFTRTLVLVSTSLLATVATSQAQEVKRDTKKQGEVVLKPITIISHGKDNIEATGGTVLTYKDIEKLQPANVSELFSRQSSIAVSGGGGPSKRIHVLGMEQSNLAVSVDGVPQTATSWHHTGSNVIDPAFLKRVEVEAGAAAADSGFGAAAGAIRYETVNALDLLEPGKTFGARIIGSYGTNGRGFSGSTAAYGLKDGFDWLLMLHGTSGHNYKNGDGTEILGTEPAARNILGKAGYEFDGNRIDIGYERSRDKADRLIKMNMGLPGDTEYPLEVARDSVNIKYTRTDATDMWDPEVQFYYNRNDYWRNDYQNRTNGNMILKEDLYGGKLQNTFTIDYGKITAGIDFGKHDYNTDNYGHNDRRYRKFNTQQVGAFTQGRFEFDNGFSLSTGARYDYSRFADWNDEVFSDSGASVNGTLSYKFNEHIEVFAGASRTWLGYVLGDYGYVHARNNAFYTDPTFSPGRARNYKAGVNFGGADWSAGITLFDTRIAGLPNYDSQKLGNDPEEYRSRGFTLNARYIWNYTTIGATFTKAKVTAGDDPVLPNSGSFMPIGDMATLFIDQEIPDYNMKVGATLAWAGRISDEAATAANFYDQPAYTVVNAYAEWNPPAVKNMTLRVGVENLFNENYYERTSFAPSQNRGGIDAVWAPGRTFTFQTAFKF.

An N-terminal signal peptide occupies residues 1–23 (MKFTRTLVLVSTSLLATVATSQA). Residues 48–159 (KDNIEATGGT…AAGAIRYETV (112 aa)) form the TBDR plug domain. Residues 170–661 (TFGARIIGSY…TFTFQTAFKF (492 aa)) enclose the TBDR beta-barrel domain.

This sequence belongs to the TonB-dependent receptor family.

Its subcellular location is the cell outer membrane. Heme transporter playing an important role in stationary-phase iron acquisition and required for maintenance of chronic infection in mice. The chain is Heme transporter BhuA (bhuA) from Brucella abortus (strain 2308).